We begin with the raw amino-acid sequence, 330 residues long: MKFVDRFRGAVAGMLRRLVVEAMGVALLSALIGVVGSAPAEAFSRPGLPVEYLQVPSPSMGRDIKVQFQNGGANSPALYLLDGLRAQDDFSGWDINTTAFEWYYQSGISVVMPVGGQSSFYSDWYSPACGKAGCQTYKWETFLTSELPQYLQSNKQIKPTGSAAVGLSMAGLSALTLAIYHPDQFIYVGSMSGLLDPSNAMGPSLIGLAMGDAGGYKAADMWGPSTDPAWKRNDPTVNVGTLIANNTRIWMYCGNGKPTELGGNNLPAKLLEGLVRTSNIKFQDGYNAGGGHNAVFNFPDSGTHSWEYWGEQLNDMKPDLQQYLGATPGA.

The first 42 residues, 1–42 (MKFVDRFRGAVAGMLRRLVVEAMGVALLSALIGVVGSAPAEA), serve as a signal peptide directing secretion. A substrate-binding site is contributed by 84-85 (LR). Positions 100–110 (FEWYYQSGISV) are fibronectin-binding. Cysteine 129 and cysteine 134 are disulfide-bonded. Positions 168 and 196 each coordinate substrate. Residue serine 168 is the Nucleophile of the active site. Glutamate 272 is an active-site residue. Residues 274 to 277 (LVRT), lysine 281, and 304 to 306 (HSW) each bind substrate. The active site involves histidine 304.

It belongs to the mycobacterial A85 antigen family. Homodimer.

Its subcellular location is the secreted. The protein localises to the cell wall. It is found in the cytoplasm. It carries out the reaction an acyl-CoA + a 1,2-diacyl-sn-glycerol = a triacyl-sn-glycerol + CoA. The catalysed reaction is 2 alpha,alpha'-trehalose 6-mycolate = alpha,alpha'-trehalose 6,6'-bismycolate + alpha,alpha-trehalose. In terms of biological role, the antigen 85 proteins (FbpA, FbpB, FbpC) are responsible for the high affinity of mycobacteria for fibronectin, a large adhesive glycoprotein, which facilitates the attachment of M.tuberculosis to murine alveolar macrophages (AMs). They also help to maintain the integrity of the cell wall by catalyzing the transfer of mycolic acids to cell wall arabinogalactan, and through the synthesis of alpha,alpha-trehalose dimycolate (TDM, cord factor). They catalyze the transfer of a mycoloyl residue from one molecule of alpha,alpha-trehalose monomycolate (TMM) to another TMM, leading to the formation of TDM. FbpA mediates triacylglycerol (TAG) formation with long-chain acyl-CoA as the acyl donor and 1,2-dipalmitoyl-sn-glycerol (1,2-dipalmitin) as the acyl acceptor. It has a preference for C26:0-CoA over C18:1-CoA. The chain is Diacylglycerol acyltransferase/mycolyltransferase Ag85A (fbpA) from Mycobacterium leprae (strain TN).